The following is a 155-amino-acid chain: Protein-export protein SecB (155 aa).

Belongs to the SecB family. As to quaternary structure, homotetramer, a dimer of dimers. One homotetramer interacts with 1 SecA dimer.

Its subcellular location is the cytoplasm. One of the proteins required for the normal export of preproteins out of the cell cytoplasm. It is a molecular chaperone that binds to a subset of precursor proteins, maintaining them in a translocation-competent state. It also specifically binds to its receptor SecA. This is Protein-export protein SecB from Paramagnetospirillum magneticum (strain ATCC 700264 / AMB-1) (Magnetospirillum magneticum).